The following is a 597-amino-acid chain: MSTISINHVGILRNPLQCKNKRTSINKPWSLSLPRSSPASRLVKPCRVSSKVDTMPDEITRRSGNYEPSLWDLDFIQSLDNHHPYVKEMQLKREEELIVQVKMLLGTKMEAVKQLELIDDLKNLGLSYFFRDEIKTILTSIYNNSFENNNQVGDLYFTALGFRLLRQHGFNVSQQIFDCFKDNDFDETLIGEDTKGILQLYEASFHLREGENTLELARQISTKYLQKKVDEGSINDENLSSWIRHSLDLPLHWRIQRLEARCFLDAYAAREDKNPLIFKLAELDFNIIQATQQQELKEISRWWNDSSLAEKLPFVRDRVVECYFWAVGLFEGHEFGFQRKITAAIIILITAIDDVYDVYGTLDELQLFTDVIRRWDTQSIDQLPYYMQLCYLALYNFVSDLAYDILKDRGLNTIPYLHRSWVELVEAYLKEAGWYENGYTPSLEEYLTNATISIGVPPIVLPVEVSLPNSTIHRTQFDRPHKILDLSARVLRLADDLGTASSELERGDVPKAIQCYMKDNNASEEEAREHVRFMIREAWKELNTAMAEPDNCPFTEQTVEAAANLGRAAQFIYLEGDGHAHFQIHQHLENLFFHPCV.

Residues 1 to 47 (MSTISINHVGILRNPLQCKNKRTSINKPWSLSLPRSSPASRLVKPCR) constitute a chloroplast transit peptide. Mn(2+) is bound by residues D353 and D357. Residues 353–357 (DDVYD) carry the DDXXD motif motif. Homodimerization regions lie at residues 359–365 (YGTLDEL) and 431–468 (EAGWYENGYTPSLEEYLTNATISIGVPPIVLPVEVSLP). 2 residues coordinate Mn(2+): D495 and E503.

It belongs to the terpene synthase family. As to quaternary structure, homodimer. Requires Mn(2+) as cofactor. The cofactor is Mg(2+).

It localises to the plastid. It is found in the chloroplast. It carries out the reaction (2E)-geranyl diphosphate + H2O = sabinene hydrate + diphosphate. Its pathway is secondary metabolite biosynthesis; terpenoid biosynthesis. In terms of biological role, involved in the biosynthesis of phenolic monoterpenes natural products. Monoterpene synthase which catalyzes the conversion of geranyl diphosphate (GPP) to sabinene hydrate, specifically (E)-sabinene hydrate, and the formation of minor amounts and traces of several other monoterpenes (e.g. mainly alpha-pinene, limonene and alpha-terpineol). This chain is (E)-sabinene hydrate synthase, chloroplastic, found in Thymus vulgaris (Thyme).